A 205-amino-acid polypeptide reads, in one-letter code: Large ribosomal subunit protein uL4 (205 aa).

Residues 53–77 form a disordered region; the sequence is RAAVRGGGRKPWKQKGTGRARAGSI. Residues 59 to 70 are compositionally biased toward basic residues; it reads GGRKPWKQKGTG.

It belongs to the universal ribosomal protein uL4 family. As to quaternary structure, part of the 50S ribosomal subunit.

Its function is as follows. One of the primary rRNA binding proteins, this protein initially binds near the 5'-end of the 23S rRNA. It is important during the early stages of 50S assembly. It makes multiple contacts with different domains of the 23S rRNA in the assembled 50S subunit and ribosome. Forms part of the polypeptide exit tunnel. The protein is Large ribosomal subunit protein uL4 of Acidithiobacillus ferrooxidans (strain ATCC 23270 / DSM 14882 / CIP 104768 / NCIMB 8455) (Ferrobacillus ferrooxidans (strain ATCC 23270)).